Reading from the N-terminus, the 380-residue chain is Glucose ABC transporter permease protein TsgB13 (380 aa).

10 helical membrane-spanning segments follow: residues 20 to 40 (GTPV…LVAL), 59 to 81 (QFGL…AVYL), 94 to 114 (GQLL…SLPA), 115 to 135 (VALL…WAGI), 148 to 166 (IITS…SYLL), 202 to 222 (IPLF…VVAT), 255 to 275 (VYLF…IAEI), 282 to 301 (FRAA…ALLG), 305 to 325 (AVKV…GSSV), and 328 to 348 (AFGV…LFLI).

This sequence belongs to the binding-protein-dependent transport system permease family. As to quaternary structure, the complex is composed of two ATP-binding proteins (TsgD13), two transmembrane proteins (TsgB13 and TsgC13) and a solute-binding protein (TsgA13).

Its subcellular location is the cell membrane. In terms of biological role, part of an ABC transporter complex involved in glucose import. Responsible for the translocation of the substrate across the membrane. This chain is Glucose ABC transporter permease protein TsgB13 (tsgB13), found in Haloferax volcanii (strain ATCC 29605 / DSM 3757 / JCM 8879 / NBRC 14742 / NCIMB 2012 / VKM B-1768 / DS2) (Halobacterium volcanii).